A 126-amino-acid polypeptide reads, in one-letter code: Fluoride-specific ion channel FluC (126 aa).

The next 4 membrane-spanning stretches (helical) occupy residues 5 to 25, 36 to 56, 69 to 89, and 99 to 119; these read GFVA…FFSV, YGTL…VAFF, LAVT…SEVI, and WAML…AFGI. Na(+)-binding residues include G76 and T79.

The protein belongs to the fluoride channel Fluc/FEX (TC 1.A.43) family.

Its subcellular location is the cell inner membrane. It carries out the reaction fluoride(in) = fluoride(out). Its activity is regulated as follows. Na(+) is not transported, but it plays an essential structural role and its presence is essential for fluoride channel function. In terms of biological role, fluoride-specific ion channel. Important for reducing fluoride concentration in the cell, thus reducing its toxicity. The polypeptide is Fluoride-specific ion channel FluC (Cupriavidus metallidurans (strain ATCC 43123 / DSM 2839 / NBRC 102507 / CH34) (Ralstonia metallidurans)).